The sequence spans 356 residues: tRNA pseudouridine synthase D (356 aa).

The active-site Nucleophile is the aspartate 84. A TRUD domain is found at 159-302 (GVPNYYGPQR…RRGARRPIRV (144 aa)).

It belongs to the pseudouridine synthase TruD family.

The enzyme catalyses uridine(13) in tRNA = pseudouridine(13) in tRNA. Functionally, responsible for synthesis of pseudouridine from uracil-13 in transfer RNAs. In Thermus thermophilus (strain ATCC BAA-163 / DSM 7039 / HB27), this protein is tRNA pseudouridine synthase D.